A 143-amino-acid polypeptide reads, in one-letter code: Putative mediator of RNA polymerase II transcription subunit 11 (143 aa).

Residues 97–143 (ILSHLEDLNNIVENNQEKQEKEKQEKEKLEKEKLEKEKQQSNEMNID) adopt a coiled-coil conformation. The tract at residues 109-143 (ENNQEKQEKEKQEKEKLEKEKLEKEKQQSNEMNID) is disordered. The span at 111 to 136 (NQEKQEKEKQEKEKLEKEKLEKEKQQ) shows a compositional bias: basic and acidic residues.

Belongs to the Mediator complex subunit 11 family. As to quaternary structure, component of the Mediator complex.

The protein localises to the nucleus. Its function is as follows. Component of the Mediator complex, a coactivator involved in the regulated transcription of nearly all RNA polymerase II-dependent genes. Mediator functions as a bridge to convey information from gene-specific regulatory proteins to the basal RNA polymerase II transcription machinery. Mediator is recruited to promoters by direct interactions with regulatory proteins and serves as a scaffold for the assembly of a functional pre-initiation complex with RNA polymerase II and the general transcription factors. The protein is Putative mediator of RNA polymerase II transcription subunit 11 (med11) of Dictyostelium discoideum (Social amoeba).